Here is a 281-residue protein sequence, read N- to C-terminus: 3-methyl-2-oxobutanoate hydroxymethyltransferase (281 aa).

Mg(2+) is bound by residues aspartate 49 and aspartate 88. Residues 49-50, aspartate 88, and lysine 118 each bind 3-methyl-2-oxobutanoate; that span reads DS. Glutamate 120 contacts Mg(2+). The active-site Proton acceptor is the glutamate 186.

The protein belongs to the PanB family. As to quaternary structure, homodecamer; pentamer of dimers. Requires Mg(2+) as cofactor.

It is found in the cytoplasm. The catalysed reaction is 3-methyl-2-oxobutanoate + (6R)-5,10-methylene-5,6,7,8-tetrahydrofolate + H2O = 2-dehydropantoate + (6S)-5,6,7,8-tetrahydrofolate. It functions in the pathway cofactor biosynthesis; (R)-pantothenate biosynthesis; (R)-pantoate from 3-methyl-2-oxobutanoate: step 1/2. Catalyzes the reversible reaction in which hydroxymethyl group from 5,10-methylenetetrahydrofolate is transferred onto alpha-ketoisovalerate to form ketopantoate. This Chelativorans sp. (strain BNC1) protein is 3-methyl-2-oxobutanoate hydroxymethyltransferase.